The sequence spans 610 residues: UvrABC system protein C (610 aa).

In terms of domain architecture, GIY-YIG spans 16 to 94 (HQPGVYRMYN…IKQYLPKYNV (79 aa)). Positions 204–239 (NQVLELLVQKMEIASQQLKFEDAAKFRDQIQAIRRV) constitute a UVR domain.

The protein belongs to the UvrC family. In terms of assembly, interacts with UvrB in an incision complex.

Its subcellular location is the cytoplasm. Functionally, the UvrABC repair system catalyzes the recognition and processing of DNA lesions. UvrC both incises the 5' and 3' sides of the lesion. The N-terminal half is responsible for the 3' incision and the C-terminal half is responsible for the 5' incision. In Vibrio vulnificus (strain CMCP6), this protein is UvrABC system protein C.